We begin with the raw amino-acid sequence, 244 residues long: Tetraspanin-1 (244 aa).

Transmembrane regions (helical) follow at residues 11–31, 67–87, 104–124, and 198–218; these read VLFFLDLAMLLAALALIAVGF, LIVVFWSIIGLSLGAVVTAVL, YLVLIIVLVSLEIGCGVAVLV, and ILLVILILQTIAIILPVPILI.

It belongs to the tetraspanin (TM4SF) family.

The protein localises to the membrane. The chain is Tetraspanin-1 (tsp-1) from Caenorhabditis elegans.